The chain runs to 165 residues: NADPH-dependent 7-cyano-7-deazaguanine reductase (165 aa).

Cysteine 56 functions as the Thioimide intermediate in the catalytic mechanism. Aspartate 63 acts as the Proton donor in catalysis. Substrate contacts are provided by residues 78–80 (VES) and 97–98 (HE). 2 residues coordinate Mg(2+): aspartate 163 and arginine 165.

This sequence belongs to the GTP cyclohydrolase I family. QueF type 1 subfamily. Forms an asymmetric tunnel-fold homodecamer of two head-to-head facing pentamers, harboring 10 active sites at the intersubunit interfaces. The cofactor is Does not require a metal cofactor..

Its subcellular location is the cytoplasm. The enzyme catalyses 7-aminomethyl-7-carbaguanine + 2 NADP(+) = 7-cyano-7-deazaguanine + 2 NADPH + 3 H(+). The protein operates within tRNA modification; tRNA-queuosine biosynthesis. Its activity is regulated as follows. Activity is strongly inhibited by Cu(2+) and Fe(3+). Its function is as follows. Catalyzes the NADPH-dependent reduction of 7-cyano-7-deazaguanine (preQ0) to 7-aminomethyl-7-deazaguanine (preQ1), a late step in the queuosine pathway. The sequence is that of NADPH-dependent 7-cyano-7-deazaguanine reductase (queF) from Bacillus subtilis (strain 168).